The sequence spans 61 residues: Early E3 6.4 kDa protein (61 aa).

Positions 1–25 are disordered; it reads MGNAGPLKLHTITKPGTIPYPPHGS.

The protein is Early E3 6.4 kDa protein of Homo sapiens (Human).